A 122-amino-acid polypeptide reads, in one-letter code: Putative MOB kinase activator-like 2B (122 aa).

Zn(2+) contacts are provided by His-69 and His-74.

This sequence belongs to the MOB1/phocein family.

Its subcellular location is the nucleus. It is found in the cytoplasm. The protein localises to the cytoskeleton. It localises to the phragmoplast. The chain is Putative MOB kinase activator-like 2B from Arabidopsis thaliana (Mouse-ear cress).